Here is a 133-residue protein sequence, read N- to C-terminus: UPF0102 protein ABSDF1354 (133 aa).

This sequence belongs to the UPF0102 family.

This is UPF0102 protein ABSDF1354 from Acinetobacter baumannii (strain SDF).